The chain runs to 246 residues: UDP-N-acetyl-D-mannosaminuronic acid transferase (246 aa).

It belongs to the glycosyltransferase 26 family.

It catalyses the reaction UDP-N-acetyl-alpha-D-mannosaminouronate + N-acetyl-alpha-D-glucosaminyl-di-trans,octa-cis-undecaprenyl diphosphate = beta-D-ManNAcA-(1-&gt;4)-alpha-D-GlcNAc-di-trans,octa-cis-undecaprenyl diphosphate + UDP + H(+). It participates in bacterial outer membrane biogenesis; enterobacterial common antigen biosynthesis. Its function is as follows. Catalyzes the synthesis of Und-PP-GlcNAc-ManNAcA (Lipid II), the second lipid-linked intermediate involved in enterobacterial common antigen (ECA) synthesis. The polypeptide is UDP-N-acetyl-D-mannosaminuronic acid transferase (Yersinia pseudotuberculosis serotype IB (strain PB1/+)).